Reading from the N-terminus, the 504-residue chain is D-alanine--D-alanyl carrier protein ligase (504 aa).

152 to 153 (TS) provides a ligand contact to ATP. Asp197 is a D-alanine binding site. An ATP-binding site is contributed by 292–297 (NTYGPT). Residue Val301 coordinates D-alanine. ATP contacts are provided by residues Asp383, 394–397 (YNGR), and Lys492. Lys492 contacts D-alanine.

It belongs to the ATP-dependent AMP-binding enzyme family. DltA subfamily.

The protein resides in the cytoplasm. It carries out the reaction holo-[D-alanyl-carrier protein] + D-alanine + ATP = D-alanyl-[D-alanyl-carrier protein] + AMP + diphosphate. Its pathway is cell wall biogenesis; lipoteichoic acid biosynthesis. Functionally, catalyzes the first step in the D-alanylation of lipoteichoic acid (LTA), the activation of D-alanine and its transfer onto the D-alanyl carrier protein (Dcp) DltC. In an ATP-dependent two-step reaction, forms a high energy D-alanyl-AMP intermediate, followed by transfer of the D-alanyl residue as a thiol ester to the phosphopantheinyl prosthetic group of the Dcp. D-alanylation of LTA plays an important role in modulating the properties of the cell wall in Gram-positive bacteria, influencing the net charge of the cell wall. The chain is D-alanine--D-alanyl carrier protein ligase from Bacillus cereus (strain ATCC 10987 / NRS 248).